Reading from the N-terminus, the 396-residue chain is Anhydro-N-acetylmuramic acid kinase (396 aa).

19 to 26 (GTSADGID) is an ATP binding site.

This sequence belongs to the anhydro-N-acetylmuramic acid kinase family.

The enzyme catalyses 1,6-anhydro-N-acetyl-beta-muramate + ATP + H2O = N-acetyl-D-muramate 6-phosphate + ADP + H(+). The protein operates within amino-sugar metabolism; 1,6-anhydro-N-acetylmuramate degradation. It participates in cell wall biogenesis; peptidoglycan recycling. Catalyzes the specific phosphorylation of 1,6-anhydro-N-acetylmuramic acid (anhMurNAc) with the simultaneous cleavage of the 1,6-anhydro ring, generating MurNAc-6-P. Is required for the utilization of anhMurNAc either imported from the medium or derived from its own cell wall murein, and thus plays a role in cell wall recycling. The polypeptide is Anhydro-N-acetylmuramic acid kinase (Colwellia psychrerythraea (strain 34H / ATCC BAA-681) (Vibrio psychroerythus)).